Reading from the N-terminus, the 333-residue chain is Glycerol-3-phosphate dehydrogenase [NAD(P)+] (333 aa).

Residues Trp16, Arg36, and Lys109 each coordinate NADPH. 3 residues coordinate sn-glycerol 3-phosphate: Lys109, Gly137, and Ser139. NADPH is bound at residue Ala141. Positions 192, 245, 255, 256, and 257 each coordinate sn-glycerol 3-phosphate. Lys192 acts as the Proton acceptor in catalysis. NADPH is bound at residue Arg256. 2 residues coordinate NADPH: Val280 and Glu282.

This sequence belongs to the NAD-dependent glycerol-3-phosphate dehydrogenase family.

It localises to the cytoplasm. It catalyses the reaction sn-glycerol 3-phosphate + NAD(+) = dihydroxyacetone phosphate + NADH + H(+). It carries out the reaction sn-glycerol 3-phosphate + NADP(+) = dihydroxyacetone phosphate + NADPH + H(+). The protein operates within membrane lipid metabolism; glycerophospholipid metabolism. Catalyzes the reduction of the glycolytic intermediate dihydroxyacetone phosphate (DHAP) to sn-glycerol 3-phosphate (G3P), the key precursor for phospholipid synthesis. The protein is Glycerol-3-phosphate dehydrogenase [NAD(P)+] of Parvibaculum lavamentivorans (strain DS-1 / DSM 13023 / NCIMB 13966).